The chain runs to 131 residues: Small ribosomal subunit protein uS8 (131 aa).

It belongs to the universal ribosomal protein uS8 family. As to quaternary structure, part of the 30S ribosomal subunit. Contacts proteins S5 and S12.

One of the primary rRNA binding proteins, it binds directly to 16S rRNA central domain where it helps coordinate assembly of the platform of the 30S subunit. The sequence is that of Small ribosomal subunit protein uS8 from Chlorobium phaeovibrioides (strain DSM 265 / 1930) (Prosthecochloris vibrioformis (strain DSM 265)).